The primary structure comprises 263 residues: Small ribosomal subunit protein uS2 (263 aa).

Residue Ser-2 is modified to N-acetylserine. Residues 213-223 (NAAEEARAGAT) are compositionally biased toward low complexity. Positions 213 to 245 (NAAEEARAGATEETEEVVAEAETEWNTETNVED) are disordered. Residues 224–245 (EETEEVVAEAETEWNTETNVED) show a composition bias toward acidic residues.

This sequence belongs to the universal ribosomal protein uS2 family. In terms of assembly, component of the small ribosomal subunit. Mature ribosomes consist of a small (40S) and a large (60S) subunit. The 40S subunit contains about 33 different proteins and 1 molecule of RNA (18S). The 60S subunit contains about 49 different proteins and 3 molecules of RNA (25S, 5.8S and 5S). Interacts with RPS21.

It localises to the cytoplasm. Its function is as follows. Required for the assembly and/or stability of the 40S ribosomal subunit. Required for the processing of the 20S rRNA-precursor to mature 18S rRNA in a late step of the maturation of 40S ribosomal subunits. The polypeptide is Small ribosomal subunit protein uS2 (Clavispora lusitaniae (strain ATCC 42720) (Yeast)).